The sequence spans 239 residues: Aspartate/glutamate leucyltransferase (239 aa).

This sequence belongs to the R-transferase family. Bpt subfamily.

The protein localises to the cytoplasm. The catalysed reaction is N-terminal L-glutamyl-[protein] + L-leucyl-tRNA(Leu) = N-terminal L-leucyl-L-glutamyl-[protein] + tRNA(Leu) + H(+). The enzyme catalyses N-terminal L-aspartyl-[protein] + L-leucyl-tRNA(Leu) = N-terminal L-leucyl-L-aspartyl-[protein] + tRNA(Leu) + H(+). Its function is as follows. Functions in the N-end rule pathway of protein degradation where it conjugates Leu from its aminoacyl-tRNA to the N-termini of proteins containing an N-terminal aspartate or glutamate. The sequence is that of Aspartate/glutamate leucyltransferase from Campylobacter jejuni subsp. jejuni serotype O:6 (strain 81116 / NCTC 11828).